A 479-amino-acid chain; its full sequence is Spindly-like protein spdl-1 (479 aa).

Coiled-coil stretches lie at residues aspartate 4–leucine 180, glutamate 210–valine 250, and leucine 321–histidine 357.

As to quaternary structure, interacts with Zwilch homolog zwl-1, a component of the RZZ complex. Interacts with mdf-1 and mdf-2.

The protein localises to the chromosome. It localises to the centromere. It is found in the kinetochore. Its subcellular location is the cytoplasm. The protein resides in the cytoskeleton. The protein localises to the spindle pole. Transient kinetochore component required for chromosome and spindle pole alignment and chromosome segregation during mitosis. Functions downstream of the RZZ complex to mediate kinetochore-microtubule attachments and nuclear envelope breakdown during cell division. Required for kinetochore assembly and localizes the checkpoint proteins mdf-1 and mdf-2, dynein and dynactin to unattached kinetochores. Dynein is believed to control the initial lateral interaction between the kinetochore and spindle microtubules and to facilitate the subsequent formation of end-on kinetochore-microtubule attachments mediated by the NDC80 complex. Required for embryonic development. This chain is Spindly-like protein spdl-1, found in Caenorhabditis elegans.